Reading from the N-terminus, the 319-residue chain is R-phycoerythrin gamma chain, chloroplastic (319 aa).

Residues 1 to 71 (MDSPAFAVTG…RPKKLASYKR (71 aa)) constitute a chloroplast transit peptide. The phycourobilin site is built by cysteine 96 and cysteine 135. A (2R,3E)-phycoerythrobilin-binding site is contributed by cysteine 212. Cysteine 299 lines the phycourobilin pocket.

Heteromer of 4 alpha, 4 beta and one gamma chains. Post-translationally, contains four covalently linked bilin chromophores.

It localises to the plastid. The protein localises to the chloroplast thylakoid membrane. The polypeptide is R-phycoerythrin gamma chain, chloroplastic (Corallina officinalis (Coral seaweed)).